Here is a 503-residue protein sequence, read N- to C-terminus: tRNA-2-methylthio-N(6)-dimethylallyladenosine synthase (503 aa).

The MTTase N-terminal domain occupies 5–121; sequence RSYEIRTFGC…LPVLLERARH (117 aa). Residues cysteine 14, cysteine 50, cysteine 84, cysteine 158, cysteine 162, and cysteine 165 each coordinate [4Fe-4S] cluster. In terms of domain architecture, Radical SAM core spans 144–380; sequence RESAYAGWVS…IALQEEISLA (237 aa). The region spanning 383 to 453 is the TRAM domain; that stretch reads RELIGTEVEL…PHHLIADAPV (71 aa).

Belongs to the methylthiotransferase family. MiaB subfamily. Monomer. Requires [4Fe-4S] cluster as cofactor.

It localises to the cytoplasm. It carries out the reaction N(6)-dimethylallyladenosine(37) in tRNA + (sulfur carrier)-SH + AH2 + 2 S-adenosyl-L-methionine = 2-methylsulfanyl-N(6)-dimethylallyladenosine(37) in tRNA + (sulfur carrier)-H + 5'-deoxyadenosine + L-methionine + A + S-adenosyl-L-homocysteine + 2 H(+). In terms of biological role, catalyzes the methylthiolation of N6-(dimethylallyl)adenosine (i(6)A), leading to the formation of 2-methylthio-N6-(dimethylallyl)adenosine (ms(2)i(6)A) at position 37 in tRNAs that read codons beginning with uridine. The chain is tRNA-2-methylthio-N(6)-dimethylallyladenosine synthase from Nocardia farcinica (strain IFM 10152).